Consider the following 244-residue polypeptide: 3-deoxy-manno-octulosonate cytidylyltransferase (244 aa).

This sequence belongs to the KdsB family.

It localises to the cytoplasm. The catalysed reaction is 3-deoxy-alpha-D-manno-oct-2-ulosonate + CTP = CMP-3-deoxy-beta-D-manno-octulosonate + diphosphate. It participates in nucleotide-sugar biosynthesis; CMP-3-deoxy-D-manno-octulosonate biosynthesis; CMP-3-deoxy-D-manno-octulosonate from 3-deoxy-D-manno-octulosonate and CTP: step 1/1. Its pathway is bacterial outer membrane biogenesis; lipopolysaccharide biosynthesis. Functionally, activates KDO (a required 8-carbon sugar) for incorporation into bacterial lipopolysaccharide in Gram-negative bacteria. In Wolinella succinogenes (strain ATCC 29543 / DSM 1740 / CCUG 13145 / JCM 31913 / LMG 7466 / NCTC 11488 / FDC 602W) (Vibrio succinogenes), this protein is 3-deoxy-manno-octulosonate cytidylyltransferase.